The primary structure comprises 619 residues: Kininogen-2 (619 aa).

The signal sequence occupies residues 1-18 (MKLITILFLCSRLLPSLT). Residue Gln19 is modified to Pyrrolidone carboxylic acid. A Cystatin kininogen-type 1 domain is found at 27–131 (CNDQDVFKAV…IQTCLITPAE (105 aa)). 9 disulfides stabilise this stretch: Cys27/Cys589, Cys82/Cys93, Cys106/Cys125, Cys141/Cys144, Cys205/Cys217, Cys228/Cys247, Cys261/Cys264, Cys325/Cys337, and Cys348/Cys367. N-linked (GlcNAc...) asparagine glycosylation occurs at Asn87. The O-linked (GalNAc...) threonine; partial glycan is linked to Thr136. In terms of domain architecture, Cystatin kininogen-type 2 spans 150-253 (TKSPDLEPVL…SQKCDLYPGE (104 aa)). Asn168 and Asn169 each carry an N-linked (GlcNAc...) asparagine glycan. N-linked (GlcNAc...) asparagine; partial glycosylation occurs at Asn197. A glycan (N-linked (GlcNAc...) asparagine) is linked at Asn204. Positions 270–373 (VDSPDLEEAL…TVNCQPLGQT (104 aa)) constitute a Cystatin kininogen-type 3 domain. Residue Asn280 is glycosylated (N-linked (GlcNAc...) asparagine). Pro380 is modified (4-hydroxyproline). The disordered stretch occupies residues 394 to 495 (EGSTTVSLPH…GKNNGKHYDW (102 aa)). Residue Ser396 is glycosylated (O-linked (GalNAc...) serine). O-linked (GalNAc...) threonine glycans are attached at residues Thr397 and Thr398. 2 O-linked (GalNAc...) serine glycosylation sites follow: Ser400 and Ser404. The segment covering 442–490 (GHKHKHDQGHGHHRSHGLGHGHQKQHGLGHGHKHGHGHGKHKNKGKNNG) has biased composition (basic residues). Ser510 carries an O-linked (GalNAc...) serine glycan. Thr518, Thr522, Thr534, Thr546, Thr551, and Thr568 each carry an O-linked (GalNAc...) threonine glycan.

In terms of processing, bradykinin is released from kininogen by plasma kallikrein. Plasma.

It is found in the secreted. The protein resides in the extracellular space. (1) Kininogens are inhibitors of thiol proteases; (2) HMW-kininogen plays an important role in blood coagulation by helping to position optimally prekallikrein and factor XI next to factor XII; (3) HMW-kininogen inhibits the thrombin- and plasmin-induced aggregation of thrombocytes; (4) the active peptide bradykinin that is released from HMW-kininogen shows a variety of physiological effects: (4A) influence in smooth muscle contraction, (4B) induction of hypotension, (4C) natriuresis and diuresis, (4D) decrease in blood glucose level, (4E) it is a mediator of inflammation and causes (4E1) increase in vascular permeability, (4E2) stimulation of nociceptors (4E3) release of other mediators of inflammation (e.g. prostaglandins), (4F) it has a cardioprotective effect (directly via bradykinin action, indirectly via endothelium-derived relaxing factor action); (5) LMW-kininogen inhibits the aggregation of thrombocytes; (6) LMW-kininogen is in contrast to HMW-kininogen not involved in blood clotting. The polypeptide is Kininogen-2 (KNG2) (Bos taurus (Bovine)).